We begin with the raw amino-acid sequence, 40 residues long: Large ribosomal subunit protein bL36B (40 aa).

Belongs to the bacterial ribosomal protein bL36 family.

The polypeptide is Large ribosomal subunit protein bL36B (Arthrobacter sp. (strain FB24)).